A 156-amino-acid chain; its full sequence is Arginine repressor (156 aa).

It belongs to the ArgR family.

The protein localises to the cytoplasm. It functions in the pathway amino-acid biosynthesis; L-arginine biosynthesis [regulation]. Regulates arginine biosynthesis genes. The polypeptide is Arginine repressor (Shewanella woodyi (strain ATCC 51908 / MS32)).